We begin with the raw amino-acid sequence, 217 residues long: Uracil-DNA glycosylase (217 aa).

The active-site Proton acceptor is the D62.

The protein belongs to the uracil-DNA glycosylase (UDG) superfamily. UNG family.

The protein resides in the cytoplasm. The catalysed reaction is Hydrolyzes single-stranded DNA or mismatched double-stranded DNA and polynucleotides, releasing free uracil.. In terms of biological role, excises uracil residues from the DNA which can arise as a result of misincorporation of dUMP residues by DNA polymerase or due to deamination of cytosine. The chain is Uracil-DNA glycosylase from Streptococcus equi subsp. zooepidemicus (strain H70).